We begin with the raw amino-acid sequence, 745 residues long: Junction plakoglobin (745 aa).

Methionine 1 carries the post-translational modification N-acetylmethionine. Threonine 14 carries O-linked (GlcNAc) threonine glycosylation. A phosphoserine mark is found at serine 99 and serine 125. ARM repeat units lie at residues 132 to 171 (NYQD…QLSK), 172 to 215 (KEAS…LSHH), 216 to 255 (REGL…NLLL), 258 to 297 (EGAK…LLAY), 298 to 341 (GNQE…LSVC), 342 to 381 (PSNK…NLSD), 383 to 420 (ATKQ…NLTC), 423 to 464 (SKNK…HLTS), 470 to 510 (EMAQ…NLAL), 512 to 551 (PANH…QPYT), 574 to 613 (PMNR…ELAQ), and 615 to 661 (KEAA…PDYR). The tract at residues 132–297 (NYQDDAELAT…TTDCLQLLAY (166 aa)) is interaction with DSC1 and DSG1. Serine 182 carries the post-translational modification Phosphoserine. An interaction with DSC1 region spans residues 574-661 (PMNRMEIFRL…ISEDKNPDYR (88 aa)). Serine 665 and serine 730 each carry phosphoserine.

Belongs to the beta-catenin family. As to quaternary structure, homodimer. Component of an E-cadherin/catenin adhesion complex composed of at least E-cadherin/CDH1 and gamma-catenin/JUP, and possibly alpha-catenin/CTNNA1; the complex is located to adherens junctions. The stable association of CTNNA1 is controversial as CTNNA1 was shown not to bind to F-actin when assembled in the complex. Interacts with MUC1. Interacts with CAV1. Interacts with PTPRJ. Interacts with DSG1. Interacts with DSC1 and DSC2. Interacts with PKP2. Interacts with PKP3 (via N-terminus); the interaction is required for PKP3 localization to desmosome cell-cell junctions. Interacts with DSG4. In terms of processing, may be phosphorylated by FER. In terms of tissue distribution, expressed in the mammary epithelium (at protein level).

The protein localises to the cell junction. It localises to the adherens junction. It is found in the desmosome. The protein resides in the cytoplasm. Its subcellular location is the cytoskeleton. The protein localises to the cell membrane. It localises to the nucleus. Functionally, common junctional plaque protein. The membrane-associated plaques are architectural elements in an important strategic position to influence the arrangement and function of both the cytoskeleton and the cells within the tissue. The presence of plakoglobin in both the desmosomes and in the intermediate junctions suggests that it plays a central role in the structure and function of submembranous plaques. Acts as a substrate for VE-PTP and is required by it to stimulate VE-cadherin function in endothelial cells. Can replace beta-catenin in E-cadherin/catenin adhesion complexes which are proposed to couple cadherins to the actin cytoskeleton. This is Junction plakoglobin from Mus musculus (Mouse).